Here is a 300-residue protein sequence, read N- to C-terminus: Porphobilinogen deaminase (300 aa).

The residue at position 239 (Cys239) is an S-(dipyrrolylmethanemethyl)cysteine.

It belongs to the HMBS family. In terms of assembly, monomer. Requires dipyrromethane as cofactor.

The catalysed reaction is 4 porphobilinogen + H2O = hydroxymethylbilane + 4 NH4(+). It participates in porphyrin-containing compound metabolism; protoporphyrin-IX biosynthesis; coproporphyrinogen-III from 5-aminolevulinate: step 2/4. Tetrapolymerization of the monopyrrole PBG into the hydroxymethylbilane pre-uroporphyrinogen in several discrete steps. The protein is Porphobilinogen deaminase of Francisella tularensis subsp. tularensis (strain WY96-3418).